The chain runs to 418 residues: Creatine kinase U-type, mitochondrial (418 aa).

A mitochondrion-targeting transit peptide spans Met-1–Ala-39. Residues Ala-40 to Met-64 form a cardiolipin-binding region. In terms of domain architecture, Phosphagen kinase N-terminal spans Arg-46–Asn-132. At Ser-152 the chain carries Phosphoserine. Residues Tyr-159–Leu-401 form the Phosphagen kinase C-terminal domain. Ser-162–Arg-166 lines the ATP pocket. Position 197 is a phosphoserine (Ser-197). Thr-214 carries the phosphothreonine modification. Position 225 (His-225) interacts with ATP. Ser-233 is modified (phosphoserine). ATP-binding positions include Arg-270, Arg-326, Arg-354–Val-359, and Asp-369. The residue at position 356 (Thr-356) is a Phosphothreonine.

Belongs to the ATP:guanido phosphotransferase family. Exists as an octamer composed of four MTCK homodimers. In many tissues, with highest levels in brain gut and kidney. In the kidney localized primarily in the outer medulla in the thick ascending limb and distal convoluted tubule.

The protein localises to the mitochondrion inner membrane. The enzyme catalyses creatine + ATP = N-phosphocreatine + ADP + H(+). Reversibly catalyzes the transfer of phosphate between ATP and various phosphogens (e.g. creatine phosphate). Creatine kinase isoenzymes play a central role in energy transduction in tissues with large, fluctuating energy demands, such as skeletal muscle, heart, brain and spermatozoa. The chain is Creatine kinase U-type, mitochondrial (Ckmt1) from Rattus norvegicus (Rat).